We begin with the raw amino-acid sequence, 254 residues long: Pyridoxine 5'-phosphate synthase (254 aa).

Asn-8 contributes to the 3-amino-2-oxopropyl phosphate binding site. 10–11 (DH) is a 1-deoxy-D-xylulose 5-phosphate binding site. Residue Arg-19 participates in 3-amino-2-oxopropyl phosphate binding. The active-site Proton acceptor is the His-44. Arg-46 and His-51 together coordinate 1-deoxy-D-xylulose 5-phosphate. The Proton acceptor role is filled by Glu-74. A 1-deoxy-D-xylulose 5-phosphate-binding site is contributed by Thr-104. Catalysis depends on His-198, which acts as the Proton donor. Residues Gly-199 and 220 to 221 (GH) each bind 3-amino-2-oxopropyl phosphate.

Belongs to the PNP synthase family. In terms of assembly, homooctamer; tetramer of dimers.

Its subcellular location is the cytoplasm. It catalyses the reaction 3-amino-2-oxopropyl phosphate + 1-deoxy-D-xylulose 5-phosphate = pyridoxine 5'-phosphate + phosphate + 2 H2O + H(+). It participates in cofactor biosynthesis; pyridoxine 5'-phosphate biosynthesis; pyridoxine 5'-phosphate from D-erythrose 4-phosphate: step 5/5. Catalyzes the complicated ring closure reaction between the two acyclic compounds 1-deoxy-D-xylulose-5-phosphate (DXP) and 3-amino-2-oxopropyl phosphate (1-amino-acetone-3-phosphate or AAP) to form pyridoxine 5'-phosphate (PNP) and inorganic phosphate. This chain is Pyridoxine 5'-phosphate synthase, found in Caulobacter vibrioides (strain ATCC 19089 / CIP 103742 / CB 15) (Caulobacter crescentus).